Reading from the N-terminus, the 305-residue chain is Mitochondrial thiamine pyrophosphate carrier 1 (305 aa).

The next 6 helical transmembrane spans lie at 16-32 (VSPY…GAVA), 84-100 (ILYV…YSSI), 122-142 (LVSG…FDLL), 169-193 (GFTG…LMFW), 213-229 (ICGF…TFPL), and 270-287 (GFGI…VSLF). 3 Solcar repeats span residues 16–103 (VSPY…ISRW), 116–201 (PSSA…VRET), and 206–295 (DIPF…SLAA).

It belongs to the mitochondrial carrier (TC 2.A.29) family.

It localises to the mitochondrion inner membrane. Mitochondrial transporter that mediates uptake of thiamine pyrophosphate (ThPP) into mitochondria. The protein is Mitochondrial thiamine pyrophosphate carrier 1 (TPC1) of Scheffersomyces stipitis (strain ATCC 58785 / CBS 6054 / NBRC 10063 / NRRL Y-11545) (Yeast).